The sequence spans 80 residues: Acyl carrier protein (80 aa).

Residues 4 to 79 form the Carrier domain; it reads EDIFSKVKDI…DAVDFIASKA (76 aa). Ser39 carries the O-(pantetheine 4'-phosphoryl)serine modification.

It belongs to the acyl carrier protein (ACP) family. Post-translationally, 4'-phosphopantetheine is transferred from CoA to a specific serine of apo-ACP by AcpS. This modification is essential for activity because fatty acids are bound in thioester linkage to the sulfhydryl of the prosthetic group.

It is found in the cytoplasm. It functions in the pathway lipid metabolism; fatty acid biosynthesis. In terms of biological role, carrier of the growing fatty acid chain in fatty acid biosynthesis. In Synechococcus elongatus (strain ATCC 33912 / PCC 7942 / FACHB-805) (Anacystis nidulans R2), this protein is Acyl carrier protein.